A 258-amino-acid polypeptide reads, in one-letter code: Ribonuclease PH (258 aa).

Residues Arg-86 and 124–126 (GTR) contribute to the phosphate site.

The protein belongs to the RNase PH family. As to quaternary structure, homohexameric ring arranged as a trimer of dimers.

It catalyses the reaction tRNA(n+1) + phosphate = tRNA(n) + a ribonucleoside 5'-diphosphate. Phosphorolytic 3'-5' exoribonuclease that plays an important role in tRNA 3'-end maturation. Removes nucleotide residues following the 3'-CCA terminus of tRNAs; can also add nucleotides to the ends of RNA molecules by using nucleoside diphosphates as substrates, but this may not be physiologically important. Probably plays a role in initiation of 16S rRNA degradation (leading to ribosome degradation) during starvation. This chain is Ribonuclease PH, found in Caldicellulosiruptor saccharolyticus (strain ATCC 43494 / DSM 8903 / Tp8T 6331).